Consider the following 701-residue polypeptide: E3 ubiquitin-protein ligase RNF19B (701 aa).

Residues 1-97 (MGSEKDSESP…PAEPLSTSQA (97 aa)) are disordered. The tract at residues 1–304 (MGSEKDSESP…VCGCEFCWLC (304 aa)) is required for ubiquitin ligase activity and for protection against staurosporin-induced cell death. Positions 57–72 (QQLHQQQQIQQQQLLQ) are enriched in low complexity. A TRIAD supradomain region spans residues 103–323 (ELLECPLCLV…LSPSGCTFWG (221 aa)). Positions 107, 110, 130, 133, 194, 199, 216, 221, 226, 229, 234, 239, 273, and 276 each coordinate Zn(2+). The RING-type 1 zinc finger occupies 107-156 (CPLCLVRQPAEQLPELQGCSHRSCLCCLRQYLRIEITESRVQLSCPECAE). The IBR-type zinc-finger motif lies at 174–239 (EKYEEFLLRR…KQAWHPNQTC (66 aa)). The segment at 273–304 (CPRCGAYIIKMNDGSCNHMTCAVCGCEFCWLC) adopts an RING-type 2; atypical zinc-finger fold. Cys288 is a catalytic residue. Residues Cys293, Cys296, Cys301, Cys304, His312, and Cys319 each coordinate Zn(2+). Transmembrane regions (helical) follow at residues 340–360 (LIGA…AMVI) and 396–416 (IITA…IMLA). Disordered regions lie at residues 472–495 (LEGA…PGGL) and 658–677 (AELT…HGAP).

Belongs to the RBR family. RNF19 subfamily. As to quaternary structure, interacts with UBE2L3, UBE2L6 and UCKL1.

The protein localises to the cytoplasmic granule membrane. Its subcellular location is the endoplasmic reticulum membrane. It catalyses the reaction [E2 ubiquitin-conjugating enzyme]-S-ubiquitinyl-L-cysteine + [acceptor protein]-L-lysine = [E2 ubiquitin-conjugating enzyme]-L-cysteine + [acceptor protein]-N(6)-ubiquitinyl-L-lysine.. Its pathway is protein modification; protein ubiquitination. Functionally, E3 ubiquitin-protein ligase which accepts ubiquitin from E2 ubiquitin-conjugating enzymes UBE2L3 and UBE2L6 in the form of a thioester and then directly transfers the ubiquitin to targeted substrates, such as UCKL1. Involved in the cytolytic activity of natural killer cells and cytotoxic T-cells. Protects against staurosporin-induced cell death. The sequence is that of E3 ubiquitin-protein ligase RNF19B (rnf19b) from Danio rerio (Zebrafish).